The following is a 268-amino-acid chain: Probable RNA methyltransferase C2A9.10 (268 aa).

In terms of domain architecture, Bin3-type SAM spans 23-258 (DPRLKCLPDS…RTMYIYKKKG (236 aa)).

This sequence belongs to the methyltransferase superfamily.

Its function is as follows. Probable RNA methyltransferase. This is Probable RNA methyltransferase C2A9.10 from Schizosaccharomyces pombe (strain 972 / ATCC 24843) (Fission yeast).